A 402-amino-acid chain; its full sequence is Protein PMR5 (402 aa).

Residues 7–23 form a helical; Signal-anchor for type II membrane protein membrane-spanning segment; it reads LLGISVVSAIFFLVLQQ. Residues 40-60 form a disordered region; that stretch reads GSSSGSSGNQYSSSRPSAGFQ. Residues 41–56 show a composition bias toward low complexity; it reads SSSGSSGNQYSSSRPS. The GDS motif signature appears at 140 to 142; that stretch reads GDS. A DCXHWCLPGXXDXWN motif motif is present at residues 379–393; sequence DCSHWCLPGLPDTWN.

The protein belongs to the PC-esterase family. TBL subfamily. As to expression, expressed in flowers, siliques, stems and leaves.

The protein localises to the membrane. Functionally, required for nonhost resistance (NHR) during plant-microbe interactions. Plants mutated in PMR5 are resistant to powdery mildew species. May act as a bridging protein that binds pectin and other cell wall polysaccharides. Probably involved in maintaining esterification of pectins. May be involved in the specific O-acetylation of cell wall polymers. This chain is Protein PMR5 (PMR5), found in Arabidopsis thaliana (Mouse-ear cress).